A 1435-amino-acid chain; its full sequence is DNA polymerase III PolC-type (1435 aa).

Positions Y420–L576 constitute an Exonuclease domain.

This sequence belongs to the DNA polymerase type-C family. PolC subfamily.

The protein localises to the cytoplasm. It carries out the reaction DNA(n) + a 2'-deoxyribonucleoside 5'-triphosphate = DNA(n+1) + diphosphate. In terms of biological role, required for replicative DNA synthesis. This DNA polymerase also exhibits 3' to 5' exonuclease activity. The sequence is that of DNA polymerase III PolC-type from Bacillus cereus (strain ATCC 14579 / DSM 31 / CCUG 7414 / JCM 2152 / NBRC 15305 / NCIMB 9373 / NCTC 2599 / NRRL B-3711).